Consider the following 64-residue polypeptide: Large ribosomal subunit protein uL30 (64 aa).

This sequence belongs to the universal ribosomal protein uL30 family. As to quaternary structure, part of the 50S ribosomal subunit.

The protein is Large ribosomal subunit protein uL30 of Bdellovibrio bacteriovorus (strain ATCC 15356 / DSM 50701 / NCIMB 9529 / HD100).